We begin with the raw amino-acid sequence, 141 residues long: Hemoglobin subunit beta-C (141 aa).

Positions 1 to 141 constitute a Globin domain; sequence PNKALITGFW…VASALAHRYH (141 aa). Heme b contacts are provided by His58 and His87.

The protein belongs to the globin family. Heterotetramer of two alpha chains and two beta chains. Red blood cells.

Involved in oxygen transport from the lung to the various peripheral tissues. The polypeptide is Hemoglobin subunit beta-C (HBBC) (Ovis aries musimon (Mouflon)).